A 262-amino-acid chain; its full sequence is 1,2-epoxyphenylacetyl-CoA isomerase (262 aa).

It belongs to the enoyl-CoA hydratase/isomerase family.

The enzyme catalyses 2-(1,2-epoxy-1,2-dihydrophenyl)acetyl-CoA = 2-oxepin-2(3H)-ylideneacetyl-CoA. Its pathway is aromatic compound metabolism; phenylacetate degradation. Functionally, catalyzes the reversible conversion of the epoxide to 2-oxepin-2(3H)-ylideneacetyl-CoA (oxepin-CoA). This chain is 1,2-epoxyphenylacetyl-CoA isomerase (paaG), found in Escherichia coli (strain K12).